Reading from the N-terminus, the 620-residue chain is Protein NRT1/ PTR FAMILY 2.13 (620 aa).

The interval 1–32 is disordered; it reads MVLEDRKDGSSLPGRSGSFSKSSPSELDVVDP. Low complexity predominate over residues 10–25; the sequence is SSLPGRSGSFSKSSPS. 12 helical membrane-spanning segments follow: residues 70-90, 95-115, 126-146, 167-187, 213-233, 241-261, 364-384, 402-422, 443-463, 485-505, 524-544, and 568-588; these read LGSI…FHLE, ANVI…GAYI, IAFA…TASF, KLQI…SGGI, FFNW…TVVV, WIIG…MFFA, IVPI…QGTF, IPAG…LPFY, LQRI…AGIV, VFWL…NIIG, SLFS…VTVV, and YFYY…WYCA.

This sequence belongs to the major facilitator superfamily. Proton-dependent oligopeptide transporter (POT/PTR) (TC 2.A.17) family. Interacts with NLA. In terms of processing, ubiquitinated by NLA. Ubiquitination of NPF2.13 leads to its degradation by the proteasome. In terms of tissue distribution, expressed in leaves and flowers. Detected in stems and siliques. Highest expression in the distal lamina of older leaves. Restricted to the sieve element and companion cell complex of the minor vein.

It localises to the cell membrane. In terms of biological role, low-affinity proton-dependent nitrate transporter. Not involved in dipeptides transport, but has a weak glucosinolate transport activity. Involved in phloem loading and nitrate remobilization from the older leaves to other tissues. This is Protein NRT1/ PTR FAMILY 2.13 (NPF2.13) from Arabidopsis thaliana (Mouse-ear cress).